The chain runs to 156 residues: 6,7-dimethyl-8-ribityllumazine synthase (156 aa).

5-amino-6-(D-ribitylamino)uracil-binding positions include F22, 57 to 59, and 81 to 83; these read AYE and TVI. (2S)-2-hydroxy-3-oxobutyl phosphate is bound at residue 86-87; the sequence is GT. Residue H89 is the Proton donor of the active site. F114 is a binding site for 5-amino-6-(D-ribitylamino)uracil. R128 contributes to the (2S)-2-hydroxy-3-oxobutyl phosphate binding site.

It belongs to the DMRL synthase family. Forms an icosahedral capsid composed of 60 subunits, arranged as a dodecamer of pentamers.

The catalysed reaction is (2S)-2-hydroxy-3-oxobutyl phosphate + 5-amino-6-(D-ribitylamino)uracil = 6,7-dimethyl-8-(1-D-ribityl)lumazine + phosphate + 2 H2O + H(+). Its pathway is cofactor biosynthesis; riboflavin biosynthesis; riboflavin from 2-hydroxy-3-oxobutyl phosphate and 5-amino-6-(D-ribitylamino)uracil: step 1/2. Functionally, catalyzes the formation of 6,7-dimethyl-8-ribityllumazine by condensation of 5-amino-6-(D-ribitylamino)uracil with 3,4-dihydroxy-2-butanone 4-phosphate. This is the penultimate step in the biosynthesis of riboflavin. The chain is 6,7-dimethyl-8-ribityllumazine synthase from Serratia proteamaculans (strain 568).